The chain runs to 457 residues: UDP-N-acetylmuramate--L-alanine ligase (457 aa).

An ATP-binding site is contributed by G118 to T124.

Belongs to the MurCDEF family.

The protein localises to the cytoplasm. The enzyme catalyses UDP-N-acetyl-alpha-D-muramate + L-alanine + ATP = UDP-N-acetyl-alpha-D-muramoyl-L-alanine + ADP + phosphate + H(+). It functions in the pathway cell wall biogenesis; peptidoglycan biosynthesis. Its function is as follows. Cell wall formation. This is UDP-N-acetylmuramate--L-alanine ligase from Clostridium perfringens (strain 13 / Type A).